The chain runs to 428 residues: Trigger factor (428 aa).

The PPIase FKBP-type domain maps to 163-248 (GNIAVIDFKG…VKEIKVKELP (86 aa)).

It belongs to the FKBP-type PPIase family. Tig subfamily.

It is found in the cytoplasm. It carries out the reaction [protein]-peptidylproline (omega=180) = [protein]-peptidylproline (omega=0). Its function is as follows. Involved in protein export. Acts as a chaperone by maintaining the newly synthesized protein in an open conformation. Functions as a peptidyl-prolyl cis-trans isomerase. The chain is Trigger factor from Clostridium perfringens (strain ATCC 13124 / DSM 756 / JCM 1290 / NCIMB 6125 / NCTC 8237 / Type A).